The chain runs to 180 residues: Adenine phosphoribosyltransferase (180 aa).

At S2 the chain carries N-acetylserine. 3 positions are modified to phosphoserine: S4, S15, and S30. Y60 bears the Phosphotyrosine mark. A Phosphoserine modification is found at S66. At K114 the chain carries N6-acetyllysine. T135 bears the Phosphothreonine mark.

Belongs to the purine/pyrimidine phosphoribosyltransferase family. In terms of assembly, homodimer.

It localises to the cytoplasm. The enzyme catalyses AMP + diphosphate = 5-phospho-alpha-D-ribose 1-diphosphate + adenine. Its pathway is purine metabolism; AMP biosynthesis via salvage pathway; AMP from adenine: step 1/1. Catalyzes a salvage reaction resulting in the formation of AMP, that is energically less costly than de novo synthesis. This chain is Adenine phosphoribosyltransferase, found in Mus pahari (Gairdner's shrew-mouse).